Reading from the N-terminus, the 147-residue chain is MALKRINKELQDLGRDPPAQCSAGPVGDDLFHWQATIMGPPDSPYQGGVFFLTIHFPTDYPFKPPKVAFTTRIYHPNINSNGSICLDILRSQWSPALTISKVLLSICSLLCDPNPDDPLVPEIARIYKTDREKYNELAREWTRKYAM.

The UBC core domain occupies 1 to 147; it reads MALKRINKEL…AREWTRKYAM (147 aa). The Glycyl thioester intermediate role is filled by C85.

The protein belongs to the ubiquitin-conjugating enzyme family.

It carries out the reaction S-ubiquitinyl-[E1 ubiquitin-activating enzyme]-L-cysteine + [E2 ubiquitin-conjugating enzyme]-L-cysteine = [E1 ubiquitin-activating enzyme]-L-cysteine + S-ubiquitinyl-[E2 ubiquitin-conjugating enzyme]-L-cysteine.. It participates in protein modification; protein ubiquitination. Functionally, catalyzes the covalent attachment of ubiquitin to other proteins. Mediates the selective degradation of short-lived and abnormal proteins. Required for proper telomere behavior during cell divisions and possibly for ubiquitination of proteins involved in postmeiotic stages of spermatogenesis. Deletion mutations are lethal in homozygotes. The polypeptide is Ubiquitin-conjugating enzyme E2-17 kDa (eff) (Drosophila melanogaster (Fruit fly)).